We begin with the raw amino-acid sequence, 131 residues long: MAKNKFHDGPGPSQRQLRVGEVIRRTLSEVLARGDIHDPELNRLSITVGEVRTSPDLKIATAYVLPLGGKGQEDVLQLLARNKSELRRAIGKKTGLKFTPDLRFQIDETFDRMDDTRRLFNQDAVRRDLED.

The protein belongs to the RbfA family. Monomer. Binds 30S ribosomal subunits, but not 50S ribosomal subunits or 70S ribosomes.

It is found in the cytoplasm. In terms of biological role, one of several proteins that assist in the late maturation steps of the functional core of the 30S ribosomal subunit. Associates with free 30S ribosomal subunits (but not with 30S subunits that are part of 70S ribosomes or polysomes). Required for efficient processing of 16S rRNA. May interact with the 5'-terminal helix region of 16S rRNA. The sequence is that of Ribosome-binding factor A from Ruegeria sp. (strain TM1040) (Silicibacter sp.).